Consider the following 454-residue polypeptide: MLNIMEVHETNKMIEQEKLDVRTITMGISLLDCAADSVDEVCENIYNKITTYAKDLVSTGRAIERDFGIPIVNKRITVTPISLVGASSCKSSEDFVKIAHALDRAAKKVGVDLIGGYSALVSKSMTPAEEMLIRSLPQALSETDIVCSSVNVGSTKTGIDMNSVELLGHIVKDIAHATADNDSYGCVKFVAFCNAPDDNPFMAGGFHGVTEGDAVINVGVSGPGVVSRALDEAKGKDFEFLCETIKRTAFKITRVGQLVAQEASRRLGIPFGIIDLSLAPTPAVGDSVGEVLEKIGLEQVGAPGTTAALAMLNDQVKKGGIMASSYVGGLSGAFIPVSEDKNMIDAANNGCLKIEKLEAMTCVCSVGLDMIAIPGDTTAATISGIIADEAAIGMVNQKTTAVRVIPVEGKGVGEMANFGGLMGYAPIIPVNQTSCEAFVTRGGRIPAPIHSFKN.

The protein belongs to the UPF0210 family. As to quaternary structure, homodimer.

This Bifidobacterium adolescentis (strain ATCC 15703 / DSM 20083 / NCTC 11814 / E194a) protein is UPF0210 protein BAD_1323.